A 229-amino-acid chain; its full sequence is Ribonuclease T (229 aa).

The Exonuclease domain maps to 23–197 (VIIDVETAGF…YDTERTAKLF (175 aa)). D26, E28, H184, and D189 together coordinate Mg(2+). H184 acts as the Proton donor/acceptor in catalysis.

The protein belongs to the RNase T family. Homodimer. It depends on Mg(2+) as a cofactor.

Trims short 3' overhangs of a variety of RNA species, leaving a one or two nucleotide 3' overhang. Responsible for the end-turnover of tRNA: specifically removes the terminal AMP residue from uncharged tRNA (tRNA-C-C-A). Also appears to be involved in tRNA biosynthesis. This chain is Ribonuclease T, found in Haemophilus influenzae (strain 86-028NP).